A 387-amino-acid polypeptide reads, in one-letter code: Probable aminomethyltransferase, mitochondrial (387 aa).

3 residues coordinate substrate: Glu-219, Arg-248, and Tyr-385.

Belongs to the GcvT family. The glycine cleavage system is composed of four proteins: P, T, L and H.

Its subcellular location is the mitochondrion. It carries out the reaction N(6)-[(R)-S(8)-aminomethyldihydrolipoyl]-L-lysyl-[protein] + (6S)-5,6,7,8-tetrahydrofolate = N(6)-[(R)-dihydrolipoyl]-L-lysyl-[protein] + (6R)-5,10-methylene-5,6,7,8-tetrahydrofolate + NH4(+). In terms of biological role, the glycine cleavage system catalyzes the degradation of glycine. The chain is Probable aminomethyltransferase, mitochondrial (gcv1) from Schizosaccharomyces pombe (strain 972 / ATCC 24843) (Fission yeast).